We begin with the raw amino-acid sequence, 246 residues long: Uridylate kinase (246 aa).

Position 20–23 (20–23 (KISG)) interacts with ATP. The segment at 28-33 (GDQGYG) is involved in allosteric activation by GTP. Residue Gly-62 participates in UMP binding. Residues Gly-63 and Arg-67 each contribute to the ATP site. UMP contacts are provided by residues Asp-82 and 143-150 (TGNPYFTT). 3 residues coordinate ATP: Thr-170, Tyr-176, and Asp-179.

The protein belongs to the UMP kinase family. As to quaternary structure, homohexamer.

It is found in the cytoplasm. It carries out the reaction UMP + ATP = UDP + ADP. The protein operates within pyrimidine metabolism; CTP biosynthesis via de novo pathway; UDP from UMP (UMPK route): step 1/1. Its activity is regulated as follows. Allosterically activated by GTP. Inhibited by UTP. In terms of biological role, catalyzes the reversible phosphorylation of UMP to UDP. The chain is Uridylate kinase from Cereibacter sphaeroides (strain ATCC 17023 / DSM 158 / JCM 6121 / CCUG 31486 / LMG 2827 / NBRC 12203 / NCIMB 8253 / ATH 2.4.1.) (Rhodobacter sphaeroides).